Consider the following 322-residue polypeptide: HPr kinase/phosphorylase (322 aa).

Catalysis depends on residues His-142 and Lys-163. 157–164 lines the ATP pocket; it reads GASGVGKS. Position 164 (Ser-164) interacts with Mg(2+). Residue Asp-181 is the Proton acceptor; for phosphorylation activity. Proton donor; for dephosphorylation activity of the active site. The important for the catalytic mechanism of both phosphorylation and dephosphorylation stretch occupies residues 205–214; the sequence is MEIRGIGIID. Glu-206 serves as a coordination point for Mg(2+). Residue Arg-247 is part of the active site. Residues 268–273 are important for the catalytic mechanism of dephosphorylation; sequence PVKVGR.

It belongs to the HPrK/P family. As to quaternary structure, homohexamer. It depends on Mg(2+) as a cofactor.

It catalyses the reaction [HPr protein]-L-serine + ATP = [HPr protein]-O-phospho-L-serine + ADP + H(+). The catalysed reaction is [HPr protein]-O-phospho-L-serine + phosphate + H(+) = [HPr protein]-L-serine + diphosphate. Catalyzes the ATP- as well as the pyrophosphate-dependent phosphorylation of a specific serine residue in HPr, a phosphocarrier protein of the phosphoenolpyruvate-dependent sugar phosphotransferase system (PTS). HprK/P also catalyzes the pyrophosphate-producing, inorganic phosphate-dependent dephosphorylation (phosphorolysis) of seryl-phosphorylated HPr (P-Ser-HPr). The two antagonistic activities of HprK/P are regulated by several intracellular metabolites, which change their concentration in response to the absence or presence of rapidly metabolisable carbon sources (glucose, fructose, etc.) in the growth medium. Therefore, by controlling the phosphorylation state of HPr, HPrK/P is a sensor enzyme that plays a major role in the regulation of carbon metabolism and sugar transport: it mediates carbon catabolite repression (CCR), and regulates PTS-catalyzed carbohydrate uptake and inducer exclusion. In Lactobacillus acidophilus (strain ATCC 700396 / NCK56 / N2 / NCFM), this protein is HPr kinase/phosphorylase.